The sequence spans 477 residues: Ankyrin repeat, SAM and basic leucine zipper domain-containing protein 1 (477 aa).

Ser17, Ser18, and Ser20 each carry phosphoserine. ANK repeat units follow at residues 46-76 (EKKE…SVDA), 80-109 (YGWT…NASF), 112-146 (DKQT…DPNV), 150-179 (RLMT…EVNT), 183-212 (NGYT…NKML), and 216-245 (DGKL…PLEG). An SAM domain is found at 274–336 (SYAAFGDLEV…KILAALKELE (63 aa)).

Interacts with DDX4, PIWIL1, RANBP9 and TDRD1.

The protein localises to the cytoplasm. Plays a central role during spermatogenesis by repressing transposable elements and preventing their mobilization, which is essential for the germline integrity. Acts via the piRNA metabolic process, which mediates the repression of transposable elements during meiosis by forming complexes composed of piRNAs and Piwi proteins and governs the methylation and subsequent repression of transposons. Its association with pi-bodies suggests a participation in the primary piRNAs metabolic process. Required prior to the pachytene stage to facilitate the production of multiple types of piRNAs, including those associated with repeats involved in the regulation of retrotransposons. May act by mediating protein-protein interactions during germ cell maturation. The sequence is that of Ankyrin repeat, SAM and basic leucine zipper domain-containing protein 1 (ASZ1) from Callithrix jacchus (White-tufted-ear marmoset).